The primary structure comprises 37 residues: MKVRPSVKKICPKCKVIRRKGVLRVICDNPRHKQRQG.

This sequence belongs to the bacterial ribosomal protein bL36 family.

This chain is Large ribosomal subunit protein bL36, found in Maridesulfovibrio salexigens (strain ATCC 14822 / DSM 2638 / NCIMB 8403 / VKM B-1763) (Desulfovibrio salexigens).